The following is a 458-amino-acid chain: Argininosuccinate lyase (458 aa).

This sequence belongs to the lyase 1 family. Argininosuccinate lyase subfamily.

The protein localises to the cytoplasm. The enzyme catalyses 2-(N(omega)-L-arginino)succinate = fumarate + L-arginine. It participates in amino-acid biosynthesis; L-arginine biosynthesis; L-arginine from L-ornithine and carbamoyl phosphate: step 3/3. The polypeptide is Argininosuccinate lyase (Salmonella schwarzengrund (strain CVM19633)).